A 718-amino-acid chain; its full sequence is Protein Smaug homolog 1 (718 aa).

S168 bears the Phosphoserine mark. The disordered stretch occupies residues 278-310; the sequence is ARGPQCLPSDHAPLSPQSSVASSGSGGSEHLED. In terms of domain architecture, SAM spans 323–396; it reads SGMKDVPAWL…LKSLERDIIE (74 aa). 2 disordered regions span residues 417 to 474 and 572 to 601; these read AYGS…LQPH and NRGF…QYQI. The residue at position 420 (S420) is a Phosphoserine. T424 bears the Phosphothreonine mark. A compositionally biased stretch (low complexity) spans 453–466; it reads GATATGATATPSAG. An Omega-N-methylarginine modification is found at R573. S580 bears the Phosphoserine mark.

This sequence belongs to the SMAUG family.

The protein localises to the cytoplasm. The protein resides in the cell projection. It localises to the dendrite. Its subcellular location is the synapse. It is found in the synaptosome. Its function is as follows. Acts as a translational repressor of SRE-containing messengers. This is Protein Smaug homolog 1 (SAMD4A) from Macaca fascicularis (Crab-eating macaque).